Here is a 270-residue protein sequence, read N- to C-terminus: NAD kinase (270 aa).

D49 functions as the Proton acceptor in the catalytic mechanism. Residues 49-50 (DG), R54, 126-127 (NE), R152, D154, 165-170 (TAYNKS), A189, and Q227 contribute to the NAD(+) site.

The protein belongs to the NAD kinase family. It depends on a divalent metal cation as a cofactor.

It is found in the cytoplasm. The enzyme catalyses NAD(+) + ATP = ADP + NADP(+) + H(+). Functionally, involved in the regulation of the intracellular balance of NAD and NADP, and is a key enzyme in the biosynthesis of NADP. Catalyzes specifically the phosphorylation on 2'-hydroxyl of the adenosine moiety of NAD to yield NADP. The sequence is that of NAD kinase from Lactococcus lactis subsp. cremoris (strain MG1363).